A 271-amino-acid chain; its full sequence is Co-chaperone protein DjlA (271 aa).

The Periplasmic portion of the chain corresponds to 1–6; it reads MQYWGK. Residues 7-31 form a helical membrane-spanning segment; the sequence is IIGVAVALLMGGGFWGVVLGLLIGH. Residues 32–271 lie on the Cytoplasmic side of the membrane; it reads MFDKARSRKM…ELIKQQKGFK (240 aa). The J domain maps to 205–271; that stretch reads DACNVLGVKP…ELIKQQKGFK (67 aa).

As to quaternary structure, homodimer.

The protein localises to the cell inner membrane. Regulatory DnaK co-chaperone. Direct interaction between DnaK and DjlA is needed for the induction of the wcaABCDE operon, involved in the synthesis of a colanic acid polysaccharide capsule, possibly through activation of the RcsB/RcsC phosphotransfer signaling pathway. The colanic acid capsule may help the bacterium survive conditions outside the host. In Escherichia coli (strain K12), this protein is Co-chaperone protein DjlA.